The primary structure comprises 163 residues: MSALVGVIMGSKSDWSTLSHTADMLDKLGIPYEVKVVSAHRTPDLLFQYAEEAEGRGLEVIIAGAGGAAHLPGMCAAKTHLPVLGVPVQSSMLSGVDSLLSIVQMPAGVPVATLAIGKAGAVNAALLSASILGAKHPQYHEALKQFRANQTETVLDNPDPRDA.

The substrate site is built by serine 11, aspartate 14, and arginine 41.

This sequence belongs to the AIR carboxylase family. Class I subfamily.

The enzyme catalyses 5-carboxyamino-1-(5-phospho-D-ribosyl)imidazole + H(+) = 5-amino-1-(5-phospho-D-ribosyl)imidazole-4-carboxylate. The protein operates within purine metabolism; IMP biosynthesis via de novo pathway; 5-amino-1-(5-phospho-D-ribosyl)imidazole-4-carboxylate from 5-amino-1-(5-phospho-D-ribosyl)imidazole (N5-CAIR route): step 2/2. Catalyzes the conversion of N5-carboxyaminoimidazole ribonucleotide (N5-CAIR) to 4-carboxy-5-aminoimidazole ribonucleotide (CAIR). This Pseudomonas aeruginosa (strain ATCC 15692 / DSM 22644 / CIP 104116 / JCM 14847 / LMG 12228 / 1C / PRS 101 / PAO1) protein is N5-carboxyaminoimidazole ribonucleotide mutase.